The chain runs to 156 residues: Small ribosomal subunit protein uS7 (156 aa).

Belongs to the universal ribosomal protein uS7 family. As to quaternary structure, part of the 30S ribosomal subunit. Contacts proteins S9 and S11.

One of the primary rRNA binding proteins, it binds directly to 16S rRNA where it nucleates assembly of the head domain of the 30S subunit. Is located at the subunit interface close to the decoding center, probably blocks exit of the E-site tRNA. The chain is Small ribosomal subunit protein uS7 from Aliivibrio salmonicida (strain LFI1238) (Vibrio salmonicida (strain LFI1238)).